A 984-amino-acid chain; its full sequence is MLGWIAKKIIGTKNEREVKRLRKFVNQINELEKELDALTNKELVELAQELHDKIRFDEELKERVIKGEITPEVIKAFALVREAAKRTLGLRHFDVQLIGGLVLHEGKIAEMKTGEGKTLVATSPAVVNGMTDEGVHIVTVNDYLARRDAQWMGPIYKFLGLEVGVINSDGKTYLVEWVDPEKVKEAIENDVRVWPKGYYEEILPSEKVNIDAKKTYFTTLKEAEHRRKAYEAHITYGTNNEFGFDYLRDNLAFSKEEIVQVKGHNYAIVDEVDSILIDEARTPLIISGPAQIDSQIYHVADAVVRKLKKDKDFTVDEKNRTVNLTEQGIKKVEKMLGIDNLYDLKHVDLLHAILQSIRAHHLFKKDVHYIVRDGEVLIVDEFTGRVLPGRRWSDGLHQAIEVKEGVPVKEENQTLASITFQNYFKLYRKLAGMTGTAETEALEFKEIYGLDVVVIPTHKPMIRKDHPDLVFKTKEEKWERVVEEVLLNHIFGRPVLVGTVSIEDNEKLSSLLKNKKLLKEIANRNSFKRRLEETAKNLGVSPEEVQKKLEEVLKKGIPHNVLNAKHHEREAEIIAQAGRVGAVTIATNMAGRGTDILLGGNPEYLAKQMLKEKGINPEEATEEQFREALREAYRITEEEKEKVKKLGGLLVIGTERHESRRIDNQLRGRAGRQGDPGESRFIVSLEDDLLRLFGGERVSKLMDMLKIERGEPIESRMVSKALENAQKRVEAQNFQIRKRLYEFDSVMNIQRDVVYTLRRQLLEGENVHEKIKEFLKDIITQKVNELLPEDDPELWDLEPLKAFLKELTGREVEIPQVRDKEELIQKLYEELLKIYEEKEKEIGSPEAMRELERVILLNLLDNAWREHLHTLDRLREGIYLRGYAGKDPLIEYKREAYELFENMMENVKLNTLMTLFNVQIKSEEEIKEVEHEEEKKHQRLLEEAELQGVQGKSDKKPRPKTLKERLKEERLRKRKLKAKKKEQE.

Residues Gln96, 114–118 (GEGKT), and Asp595 each bind ATP. Composition is skewed to basic and acidic residues over residues 930 to 942 (EHEE…RLLE) and 952 to 971 (KSDK…EERL). The tract at residues 930 to 984 (EHEEEKKHQRLLEEAELQGVQGKSDKKPRPKTLKERLKEERLRKRKLKAKKKEQE) is disordered. Over residues 972–984 (RKRKLKAKKKEQE) the composition is skewed to basic residues.

Belongs to the SecA family. In terms of assembly, monomer and homodimer. Part of the essential Sec protein translocation apparatus which comprises SecA, SecYEG and auxiliary proteins SecDF. Other proteins may also be involved.

The protein localises to the cell inner membrane. The protein resides in the cytoplasm. The enzyme catalyses ATP + H2O + cellular proteinSide 1 = ADP + phosphate + cellular proteinSide 2.. Functionally, part of the Sec protein translocase complex. Interacts with the SecYEG preprotein conducting channel. Has a central role in coupling the hydrolysis of ATP to the transfer of proteins into and across the cell membrane, serving as an ATP-driven molecular motor driving the stepwise translocation of polypeptide chains across the membrane. This chain is Protein translocase subunit SecA, found in Aquifex aeolicus (strain VF5).